We begin with the raw amino-acid sequence, 351 residues long: Ion-translocating oxidoreductase complex subunit D (351 aa).

The next 4 helical transmembrane spans lie at 18-38 (IMLL…YFFG), 42-62 (LIQV…VLHL), 87-107 (LPPL…IIIA), and 121-141 (PAMV…TSWL). Thr-185 carries the FMN phosphoryl threonine modification. 5 helical membrane passes run 212–232 (LAGI…LLLL), 241–261 (IPVS…MIAP), 264–284 (FAPP…FFIA), 298–318 (LIFG…GGYP), and 320–340 (GVAF…HYTQ).

This sequence belongs to the NqrB/RnfD family. The complex is composed of six subunits: RnfA, RnfB, RnfC, RnfD, RnfE and RnfG. FMN is required as a cofactor.

Its subcellular location is the cell inner membrane. Functionally, part of a membrane-bound complex that couples electron transfer with translocation of ions across the membrane. This is Ion-translocating oxidoreductase complex subunit D from Yersinia enterocolitica serotype O:8 / biotype 1B (strain NCTC 13174 / 8081).